Here is a 422-residue protein sequence, read N- to C-terminus: SPbeta prophage-derived glycosyltransferase SunS (422 aa).

The protein belongs to the glycosyltransferase 2 family.

In terms of biological role, transfers a hexose moiety onto 'Cys-41' of bacteriocin sublancin-168 (SunA). Accepts UDP-glucose (UDP-Glc), UDP-N-acetylglucosamine (UDP-GlcNAc), UDP-galactose (UDP-Gal), UDP-xylose (UDP-Xyl) and GDP-mannose as substrate. This Bacillus subtilis (strain 168) protein is SPbeta prophage-derived glycosyltransferase SunS (sunS).